We begin with the raw amino-acid sequence, 1479 residues long: Chromosome partition protein MukB (1479 aa).

34 to 41 (GGNGAGKS) contacts ATP. Coiled-coil stretches lie at residues 138-163 (ETLNDRQARVVSLNELKDKLEAMEGV) and 331-664 (QAAS…RLSQ). Positions 665 to 782 (PGGSEDPRLN…ALPLFGRAAR (118 aa)) are flexible hinge. Coiled-coil stretches lie at residues 831-1112 (DDPE…TAKA) and 1206-1257 (VEAI…MLNQ).

This sequence belongs to the SMC family. MukB subfamily. As to quaternary structure, homodimerization via its hinge domain. Binds to DNA via its C-terminal region. Interacts, and probably forms a ternary complex, with MukE and MukF via its C-terminal region. The complex formation is stimulated by calcium or magnesium. Interacts with tubulin-related protein FtsZ.

The protein localises to the cytoplasm. Its subcellular location is the nucleoid. Its function is as follows. Plays a central role in chromosome condensation, segregation and cell cycle progression. Functions as a homodimer, which is essential for chromosome partition. Involved in negative DNA supercoiling in vivo, and by this means organize and compact chromosomes. May achieve or facilitate chromosome segregation by condensation DNA from both sides of a centrally located replisome during cell division. In Klebsiella pneumoniae, this protein is Chromosome partition protein MukB.